The following is a 612-amino-acid chain: Apoptosis-inducing factor 1, mitochondrial (612 aa).

2 consecutive short sequence motifs (mitochondrial localization signal) follow at residues 1 to 30 (MFRC…PKQR) and 62 to 88 (KMDN…KTIK). The N-terminal 53 residues, 1–53 (MFRCGGLAGAFKQKLVPLVRSVCVQRPKQRNRLPGNLFQQWRVPLELQMARQM), are a transit peptide targeting the mitochondrion. 2 consecutive propeptides (removed in mature form) follow at residues 54-100 (ASSG…RIMG) and 55-101 (SSGP…IMGL). K108 carries the N6-succinyllysine modification. S115 carries the phosphoserine modification. The tract at residues 133-482 (FLLIGGGTAA…KPYWHQSMFW (350 aa)) is FAD-dependent oxidoreductase. Residues 137–141 (GGGTA), 163–164 (ED), R171, and K176 each bind FAD. W195 provides a ligand contact to NAD(+). V232 contacts FAD. K254 is covalently cross-linked (Glycyl lysine isopeptide (Lys-Gly) (interchain with G-Cter in ubiquitin)). S267 carries the phosphoserine modification. FAD is bound at residue R284. NAD(+) contacts are provided by residues 307-310 (GGFL), E335, and K341. S370 bears the Phosphoserine mark. K387 carries the N6-acetyllysine modification. G398 is a binding site for NAD(+). Residue D437 participates in FAD binding. The Nuclear localization signal motif lies at 445-450 (KLGRRR). Residues 452–453 (EH), W482, and E492 each bind NAD(+). FAD-binding positions include 453 to 454 (HH) and W482. Residues 512-528 (AQDNPKSATEQSGTGIR) show a composition bias toward polar residues. The tract at residues 512-551 (AQDNPKSATEQSGTGIRSESETESEASEITIPPSDPAVPQ) is disordered. A Phosphothreonine modification is found at T520. Phosphoserine is present on residues S523 and S529. N582 provides a ligand contact to NAD(+). An N6-acetyllysine modification is found at K592.

The protein belongs to the FAD-dependent oxidoreductase family. Monomer (oxidized form). Homodimer (reduced form). Upon reduction with NADH, undergoes dimerization and forms tight, long-lived FADH2-NAD charge transfer complexes (CTC) resistant to oxidation. Also dimerizes with isoform 3 preventing its release from mitochondria. Interacts with XIAP/BIRC4. Interacts (via N-terminus) with EIF3G (via C-terminus). Interacts with PRELID1. Interacts with CHCHD4; the interaction increases in presence of NADH. Interacts with processed form of PARP1 (Poly [ADP-ribose] polymerase 1, processed C-terminus); interaction is mediated with poly-ADP-ribose chains attached to PARP1, promoting translocation into the nucleus. Requires FAD as cofactor. Post-translationally, under normal conditions, a 54-residue N-terminal segment is first proteolytically removed during or just after translocation into the mitochondrial intermembrane space (IMS) by the mitochondrial processing peptidase (MPP) to form the inner-membrane-anchored mature form (AIFmit). During apoptosis, it is further proteolytically processed at amino-acid position 101 leading to the generation of the mature form, which is confined to the mitochondrial IMS in a soluble form (AIFsol). AIFsol is released to the cytoplasm in response to specific death signals, and translocated to the nucleus, where it induces nuclear apoptosis in a caspase-independent manner. Ubiquitination by XIAP/BIRC4 does not lead to proteasomal degradation. Ubiquitination at Lys-254 by XIAP/BIRC4 blocks its ability to bind DNA and induce chromatin degradation, thereby inhibiting its ability to induce cell death.

Its subcellular location is the mitochondrion intermembrane space. It localises to the mitochondrion inner membrane. The protein localises to the cytoplasm. It is found in the nucleus. The protein resides in the perinuclear region. It catalyses the reaction A + NADH + H(+) = AH2 + NAD(+). In terms of biological role, functions both as NADH oxidoreductase and as regulator of apoptosis. In response to apoptotic stimuli, it is released from the mitochondrion intermembrane space into the cytosol and to the nucleus, where it functions as a proapoptotic factor in a caspase-independent pathway. Release into the cytoplasm is mediated upon binding to poly-ADP-ribose chains. The soluble form (AIFsol) found in the nucleus induces 'parthanatos' i.e. caspase-independent fragmentation of chromosomal DNA. Binds to DNA in a sequence-independent manner. Interacts with EIF3G, and thereby inhibits the EIF3 machinery and protein synthesis, and activates caspase-7 to amplify apoptosis. Plays a critical role in caspase-independent, pyknotic cell death in hydrogen peroxide-exposed cells. In contrast, participates in normal mitochondrial metabolism. Plays an important role in the regulation of respiratory chain biogenesis by interacting with CHCHD4 and controlling CHCHD4 mitochondrial import. This chain is Apoptosis-inducing factor 1, mitochondrial (Aifm1), found in Rattus norvegicus (Rat).